Reading from the N-terminus, the 76-residue chain is UPF0729 protein C18orf32 (76 aa).

The interval 1–37 (MVCIPCIVIPVLLWIYKKFLEPYIYPLVSPFVSRIWP) is necessary for its localzation to the endoplasmic reticulum and lipid droplets. The segment at 46–76 (DTNKGKVNFKGADMNGLPTKGPTEICDKKKD) is disordered.

The protein belongs to the UPF0729 family. In terms of assembly, interacts with DERL1 and AMFR. In terms of processing, undergoes ER-associated degradation (ERAD).

It is found in the endoplasmic reticulum. The protein localises to the lipid droplet. Functionally, may activate the NF-kappa-B signaling pathway. The chain is UPF0729 protein C18orf32 (C18orf32) from Homo sapiens (Human).